Here is an 89-residue protein sequence, read N- to C-terminus: Small ribosomal subunit protein uS15 (89 aa).

The protein belongs to the universal ribosomal protein uS15 family. As to quaternary structure, part of the 30S ribosomal subunit. Forms a bridge to the 50S subunit in the 70S ribosome, contacting the 23S rRNA.

Functionally, one of the primary rRNA binding proteins, it binds directly to 16S rRNA where it helps nucleate assembly of the platform of the 30S subunit by binding and bridging several RNA helices of the 16S rRNA. In terms of biological role, forms an intersubunit bridge (bridge B4) with the 23S rRNA of the 50S subunit in the ribosome. This Rhodospirillum centenum (strain ATCC 51521 / SW) protein is Small ribosomal subunit protein uS15.